Consider the following 231-residue polypeptide: Large ribosomal subunit protein uL1 (231 aa).

The protein belongs to the universal ribosomal protein uL1 family. Part of the 50S ribosomal subunit.

Binds directly to 23S rRNA. The L1 stalk is quite mobile in the ribosome, and is involved in E site tRNA release. Functionally, protein L1 is also a translational repressor protein, it controls the translation of the L11 operon by binding to its mRNA. In Francisella philomiragia subsp. philomiragia (strain ATCC 25017 / CCUG 19701 / FSC 153 / O#319-036), this protein is Large ribosomal subunit protein uL1.